The following is a 450-amino-acid chain: uncharacterized protein (450 aa).

Positions 1–58 (MAKGEIVTVKIEEMDFKGYGVGYCEGKPLKVRGGILGQRVAVRVKKGKKGRAEGEIVE) constitute a TRAM domain. [4Fe-4S] cluster contacts are provided by C71, C77, C80, and C159. Residues Q285, Y314, E335, and D380 each coordinate S-adenosyl-L-methionine. C407 functions as the Nucleophile in the catalytic mechanism.

Belongs to the class I-like SAM-binding methyltransferase superfamily. RNA M5U methyltransferase family.

This is an uncharacterized protein from Caldanaerobacter subterraneus subsp. tengcongensis (strain DSM 15242 / JCM 11007 / NBRC 100824 / MB4) (Thermoanaerobacter tengcongensis).